A 127-amino-acid polypeptide reads, in one-letter code: Large ribosomal subunit protein bL12 (127 aa).

Belongs to the bacterial ribosomal protein bL12 family. As to quaternary structure, homodimer. Part of the ribosomal stalk of the 50S ribosomal subunit. Forms a multimeric L10(L12)X complex, where L10 forms an elongated spine to which 2 to 4 L12 dimers bind in a sequential fashion. Binds GTP-bound translation factors.

Functionally, forms part of the ribosomal stalk which helps the ribosome interact with GTP-bound translation factors. Is thus essential for accurate translation. The sequence is that of Large ribosomal subunit protein bL12 from Streptococcus thermophilus (strain CNRZ 1066).